The following is a 466-amino-acid chain: MAKTLYEKLFDAHVVYEAENETPLLYIDRHLVHEVTSPQAFDGLRAHGRPVRQPGKTFATMDHNVSTQTKDINACGEMARIQMQELIKNCKEFGVELYDLNHPYQGIVHVMGPEQGVTLPGMTIVCGDSHTATHGAFGALAFGIGTSEVEHVLATQTLKQGRAKTMKIEVQGKAAPGITAKDIVLAIIGKTGSAGGTGHVVEFCGEAIRDLSMEGRMTLCNMAIEMGAKAGLVAPDETTFNYVKGRLHAPKGKDFDDAVAYWKTLQTDEGATFDTVVTLQAEEIAPQVTWGTNPGQVISVNDNIPDPASFADPVERASAEKALAYMGLKPGIPLTEVAIDKVFIGSCTNSRIEDLRAAAEIAKGRKVAPGVQALVVPGSGPVKAQAEAEGLDKIFIEAGFEWRLPGCSMCLAMNNDRLNPGERCASTSNRNFEGRQGRGGRTHLVSPAMAAAAAVTGHFADIRNIK.

Cys347, Cys407, and Cys410 together coordinate [4Fe-4S] cluster.

Belongs to the aconitase/IPM isomerase family. LeuC type 1 subfamily. Heterodimer of LeuC and LeuD. It depends on [4Fe-4S] cluster as a cofactor.

The catalysed reaction is (2R,3S)-3-isopropylmalate = (2S)-2-isopropylmalate. It participates in amino-acid biosynthesis; L-leucine biosynthesis; L-leucine from 3-methyl-2-oxobutanoate: step 2/4. Catalyzes the isomerization between 2-isopropylmalate and 3-isopropylmalate, via the formation of 2-isopropylmaleate. In Escherichia fergusonii (strain ATCC 35469 / DSM 13698 / CCUG 18766 / IAM 14443 / JCM 21226 / LMG 7866 / NBRC 102419 / NCTC 12128 / CDC 0568-73), this protein is 3-isopropylmalate dehydratase large subunit.